We begin with the raw amino-acid sequence, 713 residues long: Polyribonucleotide nucleotidyltransferase (713 aa).

Residues D498 and D504 each contribute to the Mg(2+) site. A KH domain is found at 565 to 631 (PRILSLKVPV…RIEDLTREAK (67 aa)). The 69-residue stretch at 633–701 (GEIYEGTVTR…ERGKIDLIRP (69 aa)) folds into the S1 motif domain.

The protein belongs to the polyribonucleotide nucleotidyltransferase family. Mg(2+) serves as cofactor.

The protein resides in the cytoplasm. It catalyses the reaction RNA(n+1) + phosphate = RNA(n) + a ribonucleoside 5'-diphosphate. Functionally, involved in mRNA degradation. Catalyzes the phosphorolysis of single-stranded polyribonucleotides processively in the 3'- to 5'-direction. In Thermus thermophilus, this protein is Polyribonucleotide nucleotidyltransferase.